Reading from the N-terminus, the 475-residue chain is Phenolic acid decarboxylase (475 aa).

3 residues coordinate Mn(2+): Asn161, His183, and Glu225. Residues 161 to 166 (NVGIYR) and 182 to 183 (MH) each bind prenylated FMN. Catalysis depends on Glu274, which acts as the Proton donor.

It belongs to the UbiD family. YclC subfamily. Prenylated FMN is required as a cofactor. Requires Mn(2+) as cofactor.

The catalysed reaction is 4-hydroxybenzoate + H(+) = phenol + CO2. It catalyses the reaction vanillate + H(+) = guaiacol + CO2. Its function is as follows. Involved in the non-oxidative decarboxylation and detoxification of phenolic derivatives under both aerobic and anaerobic conditions. Phenolic acid decarboxylase that catalyzes the reversible decarboxylation of 4-hydroxybenzoate and vanillate. The chain is Phenolic acid decarboxylase from Escherichia coli O157:H7.